A 275-amino-acid chain; its full sequence is CIQLGTEQTCKSVDSNDCLVTTSVKVCLIGTVSKFQPSDTLLFLGPLEQGGLIFKQWCTTTCQFGDPGDIMSTPVGMKCPELSGSFRKKCAFATTPVCQFDGNTISGYKRMIATKDSFQSFNVTEPHISASSLEWIDPDSSLRDHINVIVGRDLSFQDLSETPCQVDLTTTSIDGAWGSGVGFNLICSVSLTECSTFLTSIKACDSAMCYGSTTANLLRGQNTVHIVGKGGHSGSKFMCCHDTKCSSTGLIAAAPHLDRVTGYNQADSDKIFDDG.

Cystine bridges form between C1/C10, C18/C27, and C58/C62. N122 is a glycosylation site (N-linked (GlcNAc...) asparagine; by host). Intrachain disulfides connect C164–C194, C187–C239, C204–C209, and C240–C245.

This sequence belongs to the hantavirus envelope glycoprotein family. As to quaternary structure, homodimer. Homotetramer; forms heterotetrameric Gn-Gc spikes in the pre-fusion conformation. Homotrimer; forms homotrimer in the post-fusion conformation at acidic pH. Interacts (via C-terminus) with the nucleoprotein. Envelope polyprotein precursor is quickly cleaved in vivo just after synthesis, presumably by host signal peptidase.

The protein resides in the virion membrane. The protein localises to the host cell surface. It localises to the host Golgi apparatus membrane. It is found in the host endoplasmic reticulum membrane. Forms homotetramers with glycoprotein N at the surface of the virion. Attaches the virion to host cell receptors including integrin ITGAV/ITGB3. This attachment induces virion internalization predominantly through clathrin-dependent endocytosis. Class II fusion protein that promotes fusion of viral membrane with host endosomal membrane after endocytosis of the virion. The polypeptide is Envelope glycoprotein (GP) (Homo sapiens (Human)).